Here is a 180-residue protein sequence, read N- to C-terminus: Iron sulfur cluster assembly protein 1, mitochondrial (180 aa).

The protein belongs to the NifU family. Component of the core Fe-S cluster (ISC) assembly machinery. It depends on [2Fe-2S] cluster as a cofactor.

The protein resides in the mitochondrion matrix. The protein operates within cofactor biosynthesis; iron-sulfur cluster biosynthesis. Scaffold protein for the de novo synthesis of iron-sulfur (Fe-S) clusters within mitochondria, which is required for maturation of both mitochondrial and cytoplasmic [2Fe-2S] and [4Fe-4S] proteins. First, a [2Fe-2S] cluster is transiently assembled on the scaffold protein ISU1. In a second step, the cluster is released from ISU1, transferred to a glutaredoxin, followed by the formation of mitochondrial [2Fe-2S] proteins, the synthesis of [4Fe-4S] clusters and their target-specific insertion into the recipient apoproteins. Cluster assembly on ISU1 depends on the function of the cysteine desulfurase complex NFS1-ISD11, which serves as the sulfur donor for cluster synthesis, the iron-binding protein frataxin as the putative iron donor, and the electron transfer chain comprised of ferredoxin reductase and ferredoxin, which receive their electrons from NADH. The protein is Iron sulfur cluster assembly protein 1, mitochondrial (ISU1) of Kluyveromyces lactis (strain ATCC 8585 / CBS 2359 / DSM 70799 / NBRC 1267 / NRRL Y-1140 / WM37) (Yeast).